We begin with the raw amino-acid sequence, 310 residues long: Very-long-chain enoyl-CoA reductase (310 aa).

Residues 1 to 85 (MPITIKSRSK…KDLGPQISWR (85 aa)) lie on the Cytoplasmic side of the membrane. The chain crosses the membrane as a helical span at residues 86–106 (LVFFCEYLGPVLVHSLFYYLS). The Lumenal segment spans residues 107–141 (TIPTVVDRWHSASSDYNPFLNRVAYFLILGHYGKR). The helical transmembrane segment at 142–162 (LFETLFVHQFSLATMPIFNLF) threads the bilayer. Residues 163–165 (KNC) lie on the Cytoplasmic side of the membrane. A helical transmembrane segment spans residues 166–186 (FHYWVLSGLISFGYFGYGFPF). Topologically, residues 187 to 201 (GNAKLFKYYSYLKLD) are lumenal. Residues 202-222 (DLSTLIGLFVLSELWNFYCHI) form a helical membrane-spanning segment. The Cytoplasmic segment spans residues 223-242 (KLRLWGDYQKKHGNAKIRVP). The helical transmembrane segment at 243–265 (LNQGIFNLFVAPNYTFEVWSWIW) threads the bilayer. Residues 266-268 (FTF) are Lumenal-facing. A helical transmembrane segment spans residues 269 to 291 (VFKFNLFAVLFLTVSTAQMYAWA). Topologically, residues 292–310 (QKKNKKYHTRRAFLIPFVF) are cytoplasmic.

This sequence belongs to the steroid 5-alpha reductase family. As to quaternary structure, interacts with the fatty acid elongation system components ELO2 and ELO3. Interacts with NVJ1.

Its subcellular location is the endoplasmic reticulum membrane. The catalysed reaction is a very-long-chain 2,3-saturated fatty acyl-CoA + NADP(+) = a very-long-chain (2E)-enoyl-CoA + NADPH + H(+). It catalyses the reaction octadecanoyl-CoA + NADP(+) = (2E)-octadecenoyl-CoA + NADPH + H(+). It carries out the reaction (2E)-eicosenoyl-CoA + NADPH + H(+) = eicosanoyl-CoA + NADP(+). The enzyme catalyses (2E)-docosenoyl-CoA + NADPH + H(+) = docosanoyl-CoA + NADP(+). The catalysed reaction is (2E)-tetracosenoyl-CoA + NADPH + H(+) = tetracosanoyl-CoA + NADP(+). It catalyses the reaction (2E)-hexacosenoyl-CoA + NADPH + H(+) = hexacosanoyl-CoA + NADP(+). It participates in lipid metabolism; fatty acid biosynthesis. Its function is as follows. Catalyzes the last of the four reactions of the long-chain fatty acids elongation cycle. This endoplasmic reticulum-bound enzymatic process, allows the addition of 2 carbons to the chain of long- and very long-chain fatty acids/VLCFAs per cycle. This enzyme reduces the trans-2,3-enoyl-CoA fatty acid intermediate to an acyl-CoA that can be further elongated by entering a new cycle of elongation. Thereby, it participates in the production of VLCFAs of different chain lengths that are involved in multiple biological processes as precursors of membrane lipids and lipid mediators. VLCFAs serve for instance as precursors for ceramide and sphingolipids. Required for normal biogenesis of piecemeal microautophagy of the nucleus (PMN) bleps and vesicles during nutrient stress. This chain is Very-long-chain enoyl-CoA reductase (TSC13), found in Saccharomyces cerevisiae (strain ATCC 204508 / S288c) (Baker's yeast).